A 101-amino-acid polypeptide reads, in one-letter code: Small ribosomal subunit protein uS14 (101 aa).

Belongs to the universal ribosomal protein uS14 family. In terms of assembly, part of the 30S ribosomal subunit. Contacts proteins S3 and S10.

Binds 16S rRNA, required for the assembly of 30S particles and may also be responsible for determining the conformation of the 16S rRNA at the A site. This Shewanella putrefaciens (strain CN-32 / ATCC BAA-453) protein is Small ribosomal subunit protein uS14.